Here is a 657-residue protein sequence, read N- to C-terminus: MPASTLLQHAQIDWDDQGRPHSRQYGDVYFAINEGIAETQHVFLEQTRLRQRFANLAPHGCLVIGETGFGTGMNFFCAWQLFAETAHADARLHFVSVEKYPLGHADMARAMRLWPELAAFTEPFLRQYVAVHQGFQQFTFDQGRITLTLLIGDVLEQLPQLDARIDVWFLDGFAPAKNPDMWTPELFTQLARLSHAGTALGTFTTTGWVRRSLIEAGFTMKKVPGIGKKWEVMSGEYTGPPNAPMSAPWYARPTAPEGPREALVIGAGLAGSASAASLAARGWQVTVLERHDAAAREASGNPQGVLYLKLSAHGTALSQMILSGFGYTRRQLELLQRGQDWDACGVLQLAFDSKEAERQGRLADAFEGSLLRAVQRNEAEAIAGVGLPAGGLFYTEGGWVHPPALCKAQLQHPNIRLLAHHDVLALRKADGLWQAWAGDRLLASAPMVVLAGAADVKRFEPCAQLPLKRIRGQITRLPVTDASRALATVVCAEGYVAPPRGEEHTLGASFDFHSDDLTPTVAEHQGNLAMLDEISTDLARRLGTAALAPEQLQGRAAFRCTSPDYLPIVGPVADPAAFAEAYAVLAKDARQVPEVPCPWLEGLYVNSGHGSRGLITAPLSGELIAAWVSGEPLPLPRAVAEACHPNRFGLRRLIRGK.

A tRNA (mnm(5)s(2)U34)-methyltransferase region spans residues 1–238 (MPASTLLQHA…KWEVMSGEYT (238 aa)). Residues 265-657 (IGAGLAGSAS…FGLRRLIRGK (393 aa)) are FAD-dependent cmnm(5)s(2)U34 oxidoreductase.

In the N-terminal section; belongs to the methyltransferase superfamily. tRNA (mnm(5)s(2)U34)-methyltransferase family. This sequence in the C-terminal section; belongs to the DAO family. Requires FAD as cofactor.

It localises to the cytoplasm. The enzyme catalyses 5-aminomethyl-2-thiouridine(34) in tRNA + S-adenosyl-L-methionine = 5-methylaminomethyl-2-thiouridine(34) in tRNA + S-adenosyl-L-homocysteine + H(+). In terms of biological role, catalyzes the last two steps in the biosynthesis of 5-methylaminomethyl-2-thiouridine (mnm(5)s(2)U) at the wobble position (U34) in tRNA. Catalyzes the FAD-dependent demodification of cmnm(5)s(2)U34 to nm(5)s(2)U34, followed by the transfer of a methyl group from S-adenosyl-L-methionine to nm(5)s(2)U34, to form mnm(5)s(2)U34. This is tRNA 5-methylaminomethyl-2-thiouridine biosynthesis bifunctional protein MnmC from Pseudomonas putida (strain W619).